Reading from the N-terminus, the 216-residue chain is Probable nicotinate-nucleotide adenylyltransferase (216 aa).

The protein belongs to the NadD family.

The catalysed reaction is nicotinate beta-D-ribonucleotide + ATP + H(+) = deamido-NAD(+) + diphosphate. Its pathway is cofactor biosynthesis; NAD(+) biosynthesis; deamido-NAD(+) from nicotinate D-ribonucleotide: step 1/1. Functionally, catalyzes the reversible adenylation of nicotinate mononucleotide (NaMN) to nicotinic acid adenine dinucleotide (NaAD). This chain is Probable nicotinate-nucleotide adenylyltransferase, found in Shewanella baltica (strain OS185).